A 463-amino-acid polypeptide reads, in one-letter code: L-seryl-tRNA(Sec) selenium transferase (463 aa).

The residue at position 295 (Lys-295) is an N6-(pyridoxal phosphate)lysine.

It belongs to the SelA family. As to quaternary structure, homodecamer; pentamer of dimers. Binds only one seryl-tRNA(Sec) per dimer. It depends on pyridoxal 5'-phosphate as a cofactor.

The protein resides in the cytoplasm. It catalyses the reaction L-seryl-tRNA(Sec) + selenophosphate + H(+) = L-selenocysteinyl-tRNA(Sec) + phosphate. Its pathway is aminoacyl-tRNA biosynthesis; selenocysteinyl-tRNA(Sec) biosynthesis; selenocysteinyl-tRNA(Sec) from L-seryl-tRNA(Sec) (bacterial route): step 1/1. Converts seryl-tRNA(Sec) to selenocysteinyl-tRNA(Sec) required for selenoprotein biosynthesis. The polypeptide is L-seryl-tRNA(Sec) selenium transferase (Escherichia coli O81 (strain ED1a)).